The sequence spans 628 residues: Patulin synthase (628 aa).

An N-terminal signal peptide occupies residues 1 to 19 (MRLTSGIFHAAIAVAAVGA). An N-linked (GlcNAc...) asparagine glycan is attached at Asn49. FAD contacts are provided by residues 61 to 62 (TA) and 82 to 83 (EA). Asn93 carries N-linked (GlcNAc...) asparagine glycosylation. Residue 148 to 151 (NYMA) participates in FAD binding. 6 N-linked (GlcNAc...) asparagine glycosylation sites follow: Asn198, Asn261, Asn283, Asn429, Asn486, and Asn526. Catalysis depends on His564, which acts as the Proton acceptor. N-linked (GlcNAc...) asparagine glycosylation is present at Asn575. FAD is bound by residues Ala598 and 609–610 (PQ).

The protein belongs to the GMC oxidoreductase family. It depends on FAD as a cofactor.

It is found in the cytoplasm. The protein resides in the cell cortex. It localises to the vacuole. Its subcellular location is the secreted. The protein localises to the cell wall. It catalyses the reaction (E)-ascladiol + A = patulin + AH2. Its pathway is mycotoxin biosynthesis; patulin biosynthesis. In terms of biological role, patulin synthase; part of the gene cluster that mediates the biosynthesis of patulin, an acetate-derived tetraketide mycotoxin produced by several fungal species that shows antimicrobial properties against several bacteria. PatE catalyzes the last step of the pathway which is the conversion of E-ascladiol to patulin. The pathway begins with the synthesis of 6-methylsalicylic acid by the polyketide synthase (PKS) patK via condensation of acetate and malonate units. The 6-methylsalicylic acid decarboxylase patG then catalyzes the decarboxylation of 6-methylsalicylic acid to yield m-cresol (also known as 3-methylphenol). These first reactions occur in the cytosol. The intermediate m-cresol is then transported into the endoplasmic reticulum where the cytochrome P450 monooxygenase patH converts it to m-hydroxybenzyl alcohol, which is further converted to gentisyl alcohol by the cytochrome P450 monooxygenase patI. The oxidoreductases patJ and patO further convert gentisyl alcohol to isoepoxydon in the vacuole. PatN catalyzes then the transformation of isoepoxydon into phyllostine. The cluster protein patF is responsible for the conversion from phyllostine to neopatulin whereas the alcohol dehydrogenase patD converts neopatulin to E-ascladiol. The steps between isoepoxydon and E-ascladiol occur in the cytosol, and E-ascladiol is probably secreted to the extracellular space by one of the cluster-specific transporters patC or patM. Finally, the secreted patulin synthase patE catalyzes the conversion of E-ascladiol to patulin. The protein is Patulin synthase of Penicillium expansum (Blue mold rot fungus).